The following is a 276-amino-acid chain: 3-methyl-2-oxobutanoate hydroxymethyltransferase (276 aa).

2 residues coordinate Mg(2+): aspartate 50 and aspartate 89. 3-methyl-2-oxobutanoate contacts are provided by residues 50–51 (DS), aspartate 89, and lysine 119. Glutamate 121 provides a ligand contact to Mg(2+). Glutamate 188 acts as the Proton acceptor in catalysis.

It belongs to the PanB family. Homodecamer; pentamer of dimers. The cofactor is Mg(2+).

The protein localises to the cytoplasm. It catalyses the reaction 3-methyl-2-oxobutanoate + (6R)-5,10-methylene-5,6,7,8-tetrahydrofolate + H2O = 2-dehydropantoate + (6S)-5,6,7,8-tetrahydrofolate. Its pathway is cofactor biosynthesis; (R)-pantothenate biosynthesis; (R)-pantoate from 3-methyl-2-oxobutanoate: step 1/2. Functionally, catalyzes the reversible reaction in which hydroxymethyl group from 5,10-methylenetetrahydrofolate is transferred onto alpha-ketoisovalerate to form ketopantoate. This is 3-methyl-2-oxobutanoate hydroxymethyltransferase from Paracoccus denitrificans (strain Pd 1222).